A 180-amino-acid chain; its full sequence is ATP-dependent protease subunit HslV (180 aa).

Thr9 is a catalytic residue. Ala164, Cys167, and Thr170 together coordinate Na(+).

The protein belongs to the peptidase T1B family. HslV subfamily. A double ring-shaped homohexamer of HslV is capped on each side by a ring-shaped HslU homohexamer. The assembly of the HslU/HslV complex is dependent on binding of ATP.

It is found in the cytoplasm. The catalysed reaction is ATP-dependent cleavage of peptide bonds with broad specificity.. Its activity is regulated as follows. Allosterically activated by HslU binding. In terms of biological role, protease subunit of a proteasome-like degradation complex believed to be a general protein degrading machinery. This chain is ATP-dependent protease subunit HslV, found in Leptospira borgpetersenii serovar Hardjo-bovis (strain JB197).